The sequence spans 155 residues: Putative pre-16S rRNA nuclease (155 aa).

It belongs to the YqgF nuclease family.

Its subcellular location is the cytoplasm. Functionally, could be a nuclease involved in processing of the 5'-end of pre-16S rRNA. In Wolbachia sp. subsp. Brugia malayi (strain TRS), this protein is Putative pre-16S rRNA nuclease.